Here is a 41-residue protein sequence, read N- to C-terminus: Large ribosomal subunit protein bL36 (41 aa).

It belongs to the bacterial ribosomal protein bL36 family.

This is Large ribosomal subunit protein bL36 from Rhodopseudomonas palustris (strain HaA2).